Here is a 215-residue protein sequence, read N- to C-terminus: Cytochrome b6 (215 aa).

Residues 32–52 (IFYCLGGITLTCFLVQVATGF) traverse the membrane as a helical segment. Cys35 contributes to the heme c binding site. The heme b site is built by His86 and His100. Helical transmembrane passes span 90-110 (ASMM…TGGF), 116-136 (LTWV…VTGY), and 186-206 (LHTF…FLMI). Heme b-binding residues include His187 and His202.

The protein belongs to the cytochrome b family. PetB subfamily. As to quaternary structure, the 4 large subunits of the cytochrome b6-f complex are cytochrome b6, subunit IV (17 kDa polypeptide, PetD), cytochrome f and the Rieske protein, while the 4 small subunits are PetG, PetL, PetM and PetN. The complex functions as a dimer. Heme b serves as cofactor. It depends on heme c as a cofactor.

It localises to the plastid. Its subcellular location is the chloroplast thylakoid membrane. In terms of biological role, component of the cytochrome b6-f complex, which mediates electron transfer between photosystem II (PSII) and photosystem I (PSI), cyclic electron flow around PSI, and state transitions. The sequence is that of Cytochrome b6 from Nicotiana tabacum (Common tobacco).